The chain runs to 303 residues: D-alanine--D-alanine ligase B (303 aa).

One can recognise an ATP-grasp domain in the interval 103–298; the sequence is KLLWKGAGLP…YEDLCLKVLD (196 aa). ATP is bound at residue 129–184; the sequence is ERQLGLPIFVKPSTEGSSIGVTKVKQPGELRAAFEEARKYDKVVIAEQFIGGGEYT. Positions 252, 265, and 267 each coordinate Mg(2+).

The protein belongs to the D-alanine--D-alanine ligase family. Mg(2+) serves as cofactor. The cofactor is Mn(2+).

It is found in the cytoplasm. The catalysed reaction is 2 D-alanine + ATP = D-alanyl-D-alanine + ADP + phosphate + H(+). The protein operates within cell wall biogenesis; peptidoglycan biosynthesis. Cell wall formation. This chain is D-alanine--D-alanine ligase B, found in Chromobacterium violaceum (strain ATCC 12472 / DSM 30191 / JCM 1249 / CCUG 213 / NBRC 12614 / NCIMB 9131 / NCTC 9757 / MK).